The chain runs to 204 residues: Quinol oxidase subunit 3 (204 aa).

5 helical membrane passes run 27–47 (FWIFLGAEIVLFSTLFATFFV), 66–86 (LVMIMTFLLLISSFTCGIAVH), 95–115 (GVVIWTIITLLLGAGFVGCEI), 140–160 (LLGTHGTHVTIGIFWIIGILI), and 184–204 (FLDVVWIFIFTGVYLMGLGGL).

The protein belongs to the cytochrome c oxidase subunit 3 family.

The protein resides in the cell membrane. The catalysed reaction is 2 a quinol + O2 = 2 a quinone + 2 H2O. Functionally, catalyzes quinol oxidation with the concomitant reduction of oxygen to water. Major component for energy conversion during vegetative growth. This Bacillus spizizenii (strain ATCC 23059 / NRRL B-14472 / W23) (Bacillus subtilis subsp. spizizenii) protein is Quinol oxidase subunit 3 (qoxC).